Consider the following 298-residue polypeptide: UDP-N-acetylenolpyruvoylglucosamine reductase (298 aa).

Residues 26-191 enclose the FAD-binding PCMH-type domain; it reads KTGGEAEYLA…LSATFSLKPG (166 aa). The active site involves R170. S220 functions as the Proton donor in the catalytic mechanism. E290 is a catalytic residue.

It belongs to the MurB family. Requires FAD as cofactor.

It localises to the cytoplasm. It carries out the reaction UDP-N-acetyl-alpha-D-muramate + NADP(+) = UDP-N-acetyl-3-O-(1-carboxyvinyl)-alpha-D-glucosamine + NADPH + H(+). It functions in the pathway cell wall biogenesis; peptidoglycan biosynthesis. Functionally, cell wall formation. The protein is UDP-N-acetylenolpyruvoylglucosamine reductase of Lactobacillus acidophilus (strain ATCC 700396 / NCK56 / N2 / NCFM).